Reading from the N-terminus, the 587-residue chain is APOBEC1 complementation factor (587 aa).

RRM domains lie at Cys56–Asp134, Cys136–Pro218, and Lys231–Pro303. The required for nuclear localization stretch occupies residues His360–Lys409. A Phosphothreonine modification is found at Thr491.

In terms of assembly, part of the apolipoprotein B mRNA editing complex with APOBEC1. Interacts with TNPO2; TNPO2 may be responsible for transport of A1CF into the nucleus. Interacts with SYNCRIP. Interacts with CELF2/CUGBP2. Interacts with RBM47.

It is found in the nucleus. The protein resides in the endoplasmic reticulum. The protein localises to the cytoplasm. In terms of biological role, essential component of the apolipoprotein B mRNA editing enzyme complex which is responsible for the postranscriptional editing of a CAA codon for Gln to a UAA codon for stop in APOB mRNA. Binds to APOB mRNA and is probably responsible for docking the catalytic subunit, APOBEC1, to the mRNA to allow it to deaminate its target cytosine. The complex also seems to protect the edited APOB mRNA from nonsense-mediated decay. This is APOBEC1 complementation factor (A1CF) from Pongo abelii (Sumatran orangutan).